The chain runs to 760 residues: 5-methyltetrahydropteroyltriglutamate--homocysteine methyltransferase (760 aa).

Residues 17 to 20 (RELK) and Lys-118 each bind 5-methyltetrahydropteroyltri-L-glutamate. L-homocysteine-binding positions include 434–436 (IGS) and Glu-487. Residues 434–436 (IGS) and Glu-487 each bind L-methionine. 5-methyltetrahydropteroyltri-L-glutamate contacts are provided by residues 518 to 519 (RC) and Trp-564. Residue Asp-602 coordinates L-homocysteine. L-methionine is bound at residue Asp-602. Position 608 (Glu-608) interacts with 5-methyltetrahydropteroyltri-L-glutamate. His-644, Cys-646, and Glu-668 together coordinate Zn(2+). His-697 (proton donor) is an active-site residue. Cys-729 is a Zn(2+) binding site.

It belongs to the vitamin-B12 independent methionine synthase family. Requires Zn(2+) as cofactor.

It carries out the reaction 5-methyltetrahydropteroyltri-L-glutamate + L-homocysteine = tetrahydropteroyltri-L-glutamate + L-methionine. Its pathway is amino-acid biosynthesis; L-methionine biosynthesis via de novo pathway; L-methionine from L-homocysteine (MetE route): step 1/1. Its function is as follows. Catalyzes the transfer of a methyl group from 5-methyltetrahydrofolate to homocysteine resulting in methionine formation. The polypeptide is 5-methyltetrahydropteroyltriglutamate--homocysteine methyltransferase (Buchnera aphidicola subsp. Cinara cedri (strain Cc)).